We begin with the raw amino-acid sequence, 260 residues long: Snake venom serine protease 2 (260 aa).

A signal peptide spans 1–18 (MVLIRVLANLLILQLFYA). A propeptide spanning residues 19 to 24 (QKSSEL) is cleaved from the precursor. In terms of domain architecture, Peptidase S1 spans 25–251 (IIGGDECNIN…HLDWIKSIIA (227 aa)). 6 disulfides stabilise this stretch: C31–C165, C52–C68, C100–C258, C144–C212, C176–C191, and C202–C227. Residues N123 and N124 are each glycosylated (N-linked (GlcNAc...) asparagine).

The protein belongs to the peptidase S1 family. Snake venom subfamily. As to quaternary structure, monomer. In terms of tissue distribution, expressed by the venom gland.

It localises to the secreted. Functionally, snake venom serine protease that may act in the hemostasis system of the prey. The sequence is that of Snake venom serine protease 2 (TLF2) from Protobothrops flavoviridis (Habu).